Here is a 518-residue protein sequence, read N- to C-terminus: Homoserine O-acetyltransferase (518 aa).

Positions 69 to 468 constitute an AB hydrolase-1 domain; that stretch reads NVMVICHALT…DSPEGHDAFL (400 aa). Residue Ser182 is part of the active site. Ser182 (nucleophile) is an active-site residue. Positions 267-365 are disordered; the sequence is RFGRNIPDPS…PNSVSDPFRP (99 aa). Over residues 290-303 the composition is skewed to basic and acidic residues; that stretch reads PAEEHYDIHNEGFR. Low complexity predominate over residues 310-341; that stretch reads RSSTTTSDAPPSPTRTSSTSSTDAITPASTTP. Residues Asp435 and His464 contribute to the active site.

This sequence belongs to the AB hydrolase superfamily. MetX family.

The enzyme catalyses L-homoserine + acetyl-CoA = O-acetyl-L-homoserine + CoA. It functions in the pathway amino-acid biosynthesis; L-methionine biosynthesis via de novo pathway; O-acetyl-L-homoserine from L-homoserine: step 1/1. Its function is as follows. Commits homoserine to the methionine biosynthesis pathway by catalyzing its O-acetylation. The sequence is that of Homoserine O-acetyltransferase (MET2) from Ascobolus immersus.